The primary structure comprises 416 residues: Tyrosine--tRNA ligase (416 aa).

Y41 provides a ligand contact to L-tyrosine. Positions 46 to 55 (ATASSLHAGH) match the 'HIGH' region motif. L-tyrosine is bound by residues Y175 and Q179. A 'KMSKS' region motif is present at residues 235-239 (KMGKT). K238 lines the ATP pocket. One can recognise an S4 RNA-binding domain in the interval 349–416 (LPVAKAFVDA…KKKHVLLKPV (68 aa)).

It belongs to the class-I aminoacyl-tRNA synthetase family. TyrS type 1 subfamily. Homodimer.

The protein resides in the cytoplasm. It catalyses the reaction tRNA(Tyr) + L-tyrosine + ATP = L-tyrosyl-tRNA(Tyr) + AMP + diphosphate + H(+). Functionally, catalyzes the attachment of tyrosine to tRNA(Tyr) in a two-step reaction: tyrosine is first activated by ATP to form Tyr-AMP and then transferred to the acceptor end of tRNA(Tyr). This Xanthobacter autotrophicus (strain ATCC BAA-1158 / Py2) protein is Tyrosine--tRNA ligase.